Reading from the N-terminus, the 212-residue chain is 3-isopropylmalate dehydratase small subunit (212 aa).

Belongs to the LeuD family. LeuD type 1 subfamily. Heterodimer of LeuC and LeuD.

The catalysed reaction is (2R,3S)-3-isopropylmalate = (2S)-2-isopropylmalate. Its pathway is amino-acid biosynthesis; L-leucine biosynthesis; L-leucine from 3-methyl-2-oxobutanoate: step 2/4. Functionally, catalyzes the isomerization between 2-isopropylmalate and 3-isopropylmalate, via the formation of 2-isopropylmaleate. The protein is 3-isopropylmalate dehydratase small subunit of Dechloromonas aromatica (strain RCB).